The chain runs to 132 residues: Protein NrdI (132 aa).

This sequence belongs to the NrdI family.

Probably involved in ribonucleotide reductase function. The polypeptide is Protein NrdI (Staphylococcus aureus (strain Mu3 / ATCC 700698)).